Here is a 218-residue protein sequence, read N- to C-terminus: Probable 2-aminoethanethiol dioxygenase (218 aa).

Fe cation serves as cofactor.

The enzyme catalyses cysteamine + O2 = hypotaurine + H(+). This Dictyostelium discoideum (Social amoeba) protein is Probable 2-aminoethanethiol dioxygenase (ado-1).